We begin with the raw amino-acid sequence, 482 residues long: FAD-dependent monooxygenase esdpE (482 aa).

The N-terminal stretch at 1 to 21 (MGAERLKVIIVGGSIAGLTLA) is a signal peptide. FAD is bound by residues Glu-35 and Arg-108. An N-linked (GlcNAc...) asparagine glycan is attached at Asn-243. FAD is bound by residues Asp-308 and Ala-321. The helical transmembrane segment at 440–460 (LFSGSLLLIMSVALLFGVICW) threads the bilayer.

It belongs to the paxM FAD-dependent monooxygenase family. It depends on FAD as a cofactor.

The protein resides in the membrane. The protein operates within secondary metabolite biosynthesis; terpenoid biosynthesis. Functionally, FAD-dependent monooxygenase; part of the cluster that mediates the biosynthesis of shearones, diterpenoid pyrones (DPs) which are structurally diverse meroterpenoids consisting of a diterpene linked by a pyrone, and which may exhibit a range of bioactivities. Within the pathway, esdpE takes part to the biosynthesis of the molecular scaffold by catalyzing the formation of an (S)-epoxide ring at the terminal olefin of the geranylgeranyl group. The molecular scaffold is commonly biosynthesized by a series of enzymes including the non-reducing polyketide synthase (NR-PKS) esdpA that generates an alpha-pyrone; the prenyltransferase esdpC that attaches a geranylgeranyl pyrophosphate (GGPP) produced by the GGPP synthase (GGPPS) esdpD onto the pyrone unit; the FAD-dependent monooxygenase esdpE that converts an olefin on the diterpene unit into an epoxide; and the terpene cyclase esdpB that catalyzes the cyclization reactions to give the molecular backbone shearone A. In the modification steps, esdpF oxidizes the hydroxy group to a ketone at C-3 and esdpG then attaches hydroxy groups at both C-11 and C-12. After that, esdpI hydroxylates at C-20 and esdpH hydroxylates at C-6'. The ether bridge is generated by nucleophilic attack of the hydroxy group at C-20 to the carbonyl carbon at C-3. EsdpH can also functions prior to esdpI. The different combinations of these modification enzymes lead to the production of diverse shearone derivatives, shearone I being the end product of the pathway. The alpha-ketoglutarate-dependent dioxygenase esdpJ seems not to be involved in this pathway. This chain is FAD-dependent monooxygenase esdpE, found in Penicillium shearii (Eupenicillium shearii).